A 681-amino-acid chain; its full sequence is Methionine--tRNA ligase (681 aa).

The 'HIGH' region signature appears at P14–H24. Positions 145, 148, 158, and 161 each coordinate Zn(2+). The short motif at K331 to S335 is the 'KMSKS' region element. Residue K334 coordinates ATP. The tRNA-binding domain maps to A579–K681.

Belongs to the class-I aminoacyl-tRNA synthetase family. MetG type 1 subfamily. Homodimer. Zn(2+) serves as cofactor.

It is found in the cytoplasm. The catalysed reaction is tRNA(Met) + L-methionine + ATP = L-methionyl-tRNA(Met) + AMP + diphosphate. Its function is as follows. Is required not only for elongation of protein synthesis but also for the initiation of all mRNA translation through initiator tRNA(fMet) aminoacylation. The protein is Methionine--tRNA ligase of Pseudomonas fluorescens (strain ATCC BAA-477 / NRRL B-23932 / Pf-5).